Consider the following 508-residue polypeptide: Aldehyde dehydrogenase family 7 member A1 (508 aa).

Glycine 244–glycine 249 is an NAD(+) binding site. The Proton acceptor role is filled by glutamate 266. The active-site Nucleophile is cysteine 300.

This sequence belongs to the aldehyde dehydrogenase family. Homotetramer.

The catalysed reaction is an aldehyde + NAD(+) + H2O = a carboxylate + NADH + 2 H(+). The sequence is that of Aldehyde dehydrogenase family 7 member A1 from Pisum sativum (Garden pea).